The chain runs to 522 residues: Sorting nexin-1 (522 aa).

Residues 1–142 (MASGGGGCSA…ELEEEEQEDQ (142 aa)) form a disordered region. 2 positions are modified to phosphoserine: Ser-32 and Ser-39. The span at 35-45 (EAGDSDTEGED) shows a compositional bias: acidic residues. 2 positions are modified to phosphothreonine: Thr-41 and Thr-48. Residues 55–65 (KPQSPKKTTSL) are compositionally biased toward polar residues. Phosphoserine is present on residues Ser-58 and Ser-72. The span at 71-80 (GSKENGIHEE) shows a compositional bias: basic and acidic residues. The span at 98–107 (LDSTQNNQKT) shows a compositional bias: polar residues. Acidic residues predominate over residues 132–142 (EELEEEEQEDQ). A PX domain is found at 143–272 (FDLTVGITDP…EFLEKEELPR (130 aa)). A 1,2-diacyl-sn-glycero-3-phospho-(1D-myo-inositol-3-phosphate) contacts are provided by Arg-186, Ser-188, and Lys-214. A Phosphoserine modification is found at Ser-188. Lys-237 is modified (N6-acetyllysine). Arg-238 contacts a 1,2-diacyl-sn-glycero-3-phospho-(1D-myo-inositol-3-phosphate). Residue Ser-280 is modified to Phosphoserine. Residues 281–298 (GAGLLKMFNKATDAVSKM) form a membrane-binding amphipathic helix region. Positions 302–522 (MNESDIWFEE…AFLPEARAIS (221 aa)) constitute a BAR domain.

It belongs to the sorting nexin family. Predominantly forms heterodimers with BAR domain-containing sorting nexins SNX5, SNX6 and SNX32; can self-associate to form homodimers. The heterodimers are proposed to self-assemble into helical arrays on the membrane to stabilize and expand local membrane curvature underlying endosomal tubule formation. Thought to be a component of the originally described retromer complex (also called SNX-BAR retromer) which is a pentamer containing the heterotrimeric retromer cargo-selective complex (CSC), also described as vacuolar protein sorting subcomplex (VPS) and a heterodimeric membrane-deforming subcomplex formed between SNX1 or SNX2 and SNX5 or SNX6 (also called SNX-BAR subcomplex); the respective CSC and SNX-BAR subcomplexes associate with low affinity. Interacts with SNX5, SNX6, SNX32, VPS26A, VPS29, VPS35, DRD5, DENND5A, KALRN, RHOG (GDP-bound form). The interaction with SNX2 is reported controversially. Interacts with DNAJC13; prevented by presence of HGS. Interacts with HGS.

The protein resides in the endosome membrane. It localises to the golgi apparatus. The protein localises to the trans-Golgi network membrane. It is found in the early endosome membrane. Its subcellular location is the cell projection. The protein resides in the lamellipodium. Its function is as follows. Involved in several stages of intracellular trafficking. Interacts with membranes containing phosphatidylinositol 3-phosphate (PtdIns(3P)) or phosphatidylinositol 3,5-bisphosphate (PtdIns(3,5)P2). Acts in part as component of the retromer membrane-deforming SNX-BAR subcomplex. The SNX-BAR retromer mediates retrograde transport of cargo proteins from endosomes to the trans-Golgi network (TGN) and is involved in endosome-to-plasma membrane transport for cargo protein recycling. The SNX-BAR subcomplex functions to deform the donor membrane into a tubular profile called endosome-to-TGN transport carrier (ETC). Can sense membrane curvature and has in vitro vesicle-to-membrane remodeling activity. Involved in retrograde endosome-to-TGN transport of lysosomal enzyme receptors (IGF2R, M6PR and SORT1). Plays a role in targeting ligand-activated EGFR to the lysosomes for degradation after endocytosis from the cell surface and release from the Golgi. Involvement in retromer-independent endocytic trafficking of P2RY1 and lysosomal degradation of protease-activated receptor-1/F2R. Promotes KALRN- and RHOG-dependent but retromer-independent membrane remodeling such as lamellipodium formation; the function is dependent on GEF activity of KALRN. Required for endocytosis of DRD5 upon agonist stimulation but not for basal receptor trafficking. This is Sorting nexin-1 (Snx1) from Rattus norvegicus (Rat).